A 348-amino-acid chain; its full sequence is Alcohol dehydrogenase 2 (348 aa).

Position 2 is an N-acetylserine (S2). 7 residues coordinate Zn(2+): C44, H67, C98, C101, C104, C112, and C154. NAD(+)-binding positions include 178–184, D202, K207, 269–271, and R341; these read GAAGGLG and VGL.

The protein belongs to the zinc-containing alcohol dehydrogenase family. In terms of assembly, homotetramer. Zn(2+) serves as cofactor.

It is found in the cytoplasm. The enzyme catalyses a primary alcohol + NAD(+) = an aldehyde + NADH + H(+). The catalysed reaction is a secondary alcohol + NAD(+) = a ketone + NADH + H(+). This Kluyveromyces marxianus (Yeast) protein is Alcohol dehydrogenase 2 (ADH2).